The chain runs to 314 residues: 4-hydroxy-3-methylbut-2-enyl diphosphate reductase (314 aa).

C12 is a [4Fe-4S] cluster binding site. Positions 41 and 74 each coordinate (2E)-4-hydroxy-3-methylbut-2-enyl diphosphate. H41 and H74 together coordinate dimethylallyl diphosphate. Residues H41 and H74 each contribute to the isopentenyl diphosphate site. C96 is a [4Fe-4S] cluster binding site. (2E)-4-hydroxy-3-methylbut-2-enyl diphosphate is bound at residue H124. Residue H124 coordinates dimethylallyl diphosphate. Residue H124 participates in isopentenyl diphosphate binding. E126 serves as the catalytic Proton donor. Residue T167 coordinates (2E)-4-hydroxy-3-methylbut-2-enyl diphosphate. Residue C197 participates in [4Fe-4S] cluster binding. The (2E)-4-hydroxy-3-methylbut-2-enyl diphosphate site is built by S225, S226, N227, and S269. The dimethylallyl diphosphate site is built by S225, S226, N227, and S269. The isopentenyl diphosphate site is built by S225, S226, N227, and S269.

The protein belongs to the IspH family. Requires [4Fe-4S] cluster as cofactor.

It catalyses the reaction isopentenyl diphosphate + 2 oxidized [2Fe-2S]-[ferredoxin] + H2O = (2E)-4-hydroxy-3-methylbut-2-enyl diphosphate + 2 reduced [2Fe-2S]-[ferredoxin] + 2 H(+). The catalysed reaction is dimethylallyl diphosphate + 2 oxidized [2Fe-2S]-[ferredoxin] + H2O = (2E)-4-hydroxy-3-methylbut-2-enyl diphosphate + 2 reduced [2Fe-2S]-[ferredoxin] + 2 H(+). Its pathway is isoprenoid biosynthesis; dimethylallyl diphosphate biosynthesis; dimethylallyl diphosphate from (2E)-4-hydroxy-3-methylbutenyl diphosphate: step 1/1. It functions in the pathway isoprenoid biosynthesis; isopentenyl diphosphate biosynthesis via DXP pathway; isopentenyl diphosphate from 1-deoxy-D-xylulose 5-phosphate: step 6/6. Catalyzes the conversion of 1-hydroxy-2-methyl-2-(E)-butenyl 4-diphosphate (HMBPP) into a mixture of isopentenyl diphosphate (IPP) and dimethylallyl diphosphate (DMAPP). Acts in the terminal step of the DOXP/MEP pathway for isoprenoid precursor biosynthesis. The protein is 4-hydroxy-3-methylbut-2-enyl diphosphate reductase of Glaesserella parasuis serovar 5 (strain SH0165) (Haemophilus parasuis).